A 225-amino-acid polypeptide reads, in one-letter code: AA9 family lytic polysaccharide monooxygenase A (225 aa).

A signal peptide spans 1-17 (MLTTTFALLTAALGVSA). Residues His-18 and His-85 each coordinate Cu(2+). 2 disulfide bridges follow: Cys-55–Cys-173 and Cys-143–Cys-225. Positions 159 and 168 each coordinate O2. Residue Tyr-170 coordinates Cu(2+).

This sequence belongs to the polysaccharide monooxygenase AA9 family. Cu(2+) serves as cofactor.

Its subcellular location is the secreted. The catalysed reaction is [(1-&gt;4)-beta-D-glucosyl]n+m + reduced acceptor + O2 = 4-dehydro-beta-D-glucosyl-[(1-&gt;4)-beta-D-glucosyl]n-1 + [(1-&gt;4)-beta-D-glucosyl]m + acceptor + H2O.. Is able to utilize various natural phenolic compounds as reducing agents. Most of these reducing agents are present in plants, either free or as lignin building blocks, such as sinapic acid, or as flavonoids such as catechin and dopamine. Phenolic compounds with 1,2-benzenediol and 1,2,3-benzenetriol moieties yield the highest release of oxidized and non-oxidized glucooligosaccharides from cellulose compared to monophenols or sulfur-containing compounds. Functionally, lytic polysaccharide monooxygenase (LPMO) that depolymerizes crystalline and amorphous polysaccharides via the oxidation of scissile alpha- or beta-(1-4)-glycosidic bonds, yielding C1 or C4 oxidation products. Catalysis by LPMOs requires the reduction of the active-site copper from Cu(II) to Cu(I) by a reducing agent and H(2)O(2) or O(2) as a cosubstrate. Shows oxidative cleavage of xylan in addition to cellulose. Shows a strong synergistic effect with endoglucanase I (EGI) with a 16-fold higher release of detected oligosaccharides. In Thermothelomyces thermophilus (strain ATCC 42464 / BCRC 31852 / DSM 1799) (Sporotrichum thermophile), this protein is AA9 family lytic polysaccharide monooxygenase A.